The chain runs to 986 residues: Translation initiation factor IF-2 (986 aa).

Positions 49–59 (EFAKDNAKGDS) are enriched in basic and acidic residues. Residues 49–370 (EFAKDNAKGD…KNRLAKRHEY (322 aa)) form a disordered region. Positions 60 to 112 (KPASSAQKPAAKPVQQRRPAAPSAPASTSSSAPTPAAPARQASPASAHQQAPT) are enriched in low complexity. Over residues 135–168 (GQHDNRENGRDNREGRENGRQSRPNDRRNNDRRN) the composition is skewed to basic and acidic residues. A compositionally biased stretch (low complexity) spans 170–182 (QGRPNNGQPGQHQ). Gly residues-rich tracts occupy residues 254 to 286 (GRGG…GGPR) and 296 to 353 (GQGG…GRQG). Over residues 357-366 (SKARKNRLAK) the composition is skewed to basic residues. Residues 479–651 (PRPPVVTVMG…VLLTADAELD (173 aa)) enclose the tr-type G domain. Positions 488 to 495 (GHVDHGKT) are G1. 488 to 495 (GHVDHGKT) lines the GTP pocket. The tract at residues 513 to 517 (GITQR) is G2. The G3 stretch occupies residues 538 to 541 (DTPG). Residues 538-542 (DTPGH) and 592-595 (NKID) each bind GTP. Residues 592 to 595 (NKID) are G4. A G5 region spans residues 628 to 630 (SAK).

This sequence belongs to the TRAFAC class translation factor GTPase superfamily. Classic translation factor GTPase family. IF-2 subfamily.

It is found in the cytoplasm. One of the essential components for the initiation of protein synthesis. Protects formylmethionyl-tRNA from spontaneous hydrolysis and promotes its binding to the 30S ribosomal subunits. Also involved in the hydrolysis of GTP during the formation of the 70S ribosomal complex. The chain is Translation initiation factor IF-2 from Bifidobacterium longum subsp. infantis (strain ATCC 15697 / DSM 20088 / JCM 1222 / NCTC 11817 / S12).